The following is a 299-amino-acid chain: Oxygen-dependent coproporphyrinogen-III oxidase (299 aa).

S92 is a substrate binding site. Residues H96 and H106 each contribute to the a divalent metal cation site. The Proton donor role is filled by H106. 108–110 (NVR) contacts substrate. A divalent metal cation-binding residues include H145 and H175. The interval 240–275 (YVEFNLVWDRGTLFGLQTGGRTESILMSMPPLVRWE) is important for dimerization. Substrate is bound at residue 258 to 260 (GGR).

It belongs to the aerobic coproporphyrinogen-III oxidase family. Homodimer. It depends on a divalent metal cation as a cofactor.

It localises to the cytoplasm. It carries out the reaction coproporphyrinogen III + O2 + 2 H(+) = protoporphyrinogen IX + 2 CO2 + 2 H2O. It functions in the pathway porphyrin-containing compound metabolism; protoporphyrin-IX biosynthesis; protoporphyrinogen-IX from coproporphyrinogen-III (O2 route): step 1/1. Involved in the heme biosynthesis. Catalyzes the aerobic oxidative decarboxylation of propionate groups of rings A and B of coproporphyrinogen-III to yield the vinyl groups in protoporphyrinogen-IX. In Salmonella choleraesuis (strain SC-B67), this protein is Oxygen-dependent coproporphyrinogen-III oxidase.